The following is a 502-amino-acid chain: MXXXXGYLEFDGARQQSFLYPLFFREYIYVLAYDQGLNRLNRNRSIFLENADYDKKYSSLIVKRLILRMYEQNRLIIPTKGLNKNLGHTNLFYYQMISVLFAVIVEIPFSLRLGSSFEGKKLKKSYNLQSIHSIFPFLEDKFSHFNYVLDVLIPYPIHLEILVQTLRYRVKDASSLHFFRFCLYEYCNWKNFYSKKKSILNPRFLLFLYNSHVCEYESIFFFLRKRSSHLRSTSYEVFFERILFYGKIQHFLKVFINNFPAILGLLKDPFLHYVRYHGKCILATKDTPLLMNKWKYYFVNLWQCYFSVWFQSQKVNINKLSKDNLEFLGYLSSLRLNPLVVRSQMLENSFLIDNVRIKLDSKIPISSIIGSLAKDKFCNVLGHPISKATWTDSSDSDILNRFVRICRNISHYYSGSSKKKNLYRIKYILRLCCVKTLARKHKSTVRAFLKRLGSGLLEEFLTGEDQVLSLIFQRSDYASKRLYRVRVWYLDILYLNDLVNHE.

It belongs to the intron maturase 2 family. MatK subfamily.

It localises to the plastid. Its subcellular location is the chloroplast. In terms of biological role, usually encoded in the trnK tRNA gene intron. Probably assists in splicing its own and other chloroplast group II introns. The polypeptide is Maturase K (Sisymbrium irio (London rocket)).